The sequence spans 96 residues: UPF0251 protein VPA0321 (96 aa).

Belongs to the UPF0251 family.

This chain is UPF0251 protein VPA0321, found in Vibrio parahaemolyticus serotype O3:K6 (strain RIMD 2210633).